Here is a 137-residue protein sequence, read N- to C-terminus: Insulin-like peptide 2 (137 aa).

A signal peptide spans 1–26; sequence MSKPLSFISMVAVILLASSTVKLAQG. Intrachain disulfides connect Cys-29–Cys-119, Cys-41–Cys-132, and Cys-118–Cys-123. A propeptide spans 53–104 (connecting peptide); it reads AMPGADSDLDALNPLQFVQEFEEEDNSISEPLRSALFPGSYLGGVLNSLAEV.

This sequence belongs to the insulin family. As to quaternary structure, heterodimer of a B chain and an A chain linked by two disulfide bonds. Broadly expressed at a low level in the embryonic mesoderm, beginning at stage 12. Expressed at a high level in the embryonic anterior midgut, with expression diminishing at late stage 16. Expressed at a low level in larval imaginal disks. Expressed at a high level in larval salivary glands and in seven cells of each larval brain hemisphere that may correspond to neurosecretory cells.

It localises to the secreted. Possible ligand of InR/insulin-like receptor. Its function is as follows. Plays a role in regulating body size by increasing cell size and cell number of individual organs. Probably mediates its growth effects by acting as a ligand for the insulin receptor and transducing a signal via the Chico/PI3K/Akt(PKB) pathway. The chain is Insulin-like peptide 2 from Drosophila melanogaster (Fruit fly).